A 368-amino-acid chain; its full sequence is Mitogen-activated protein kinase 7 (368 aa).

The Protein kinase domain maps to 32–319 (YVPIKPIGRG…VTDALLHPYM (288 aa)). ATP-binding positions include 38 to 46 (IGRGAYGVV) and lysine 61. The active-site Proton acceptor is aspartate 158. Threonine 191 is subject to Phosphothreonine. The short motif at 191–193 (TEY) is the TXY element. Tyrosine 193 carries the phosphotyrosine modification. Threonine 196 is modified (phosphothreonine).

This sequence belongs to the protein kinase superfamily. CMGC Ser/Thr protein kinase family. MAP kinase subfamily. As to quaternary structure, interacts with MKK3. Mg(2+) serves as cofactor. In terms of processing, dually phosphorylated on Thr-191 and Tyr-193, which activates the enzyme.

The enzyme catalyses L-seryl-[protein] + ATP = O-phospho-L-seryl-[protein] + ADP + H(+). It catalyses the reaction L-threonyl-[protein] + ATP = O-phospho-L-threonyl-[protein] + ADP + H(+). Its activity is regulated as follows. Activated by threonine and tyrosine phosphorylation. Activated in response to hydrogen peroxide. Activation is triggered by MAPKKK17 and MAPKKK18 in a MKK3-dependent manner. Its function is as follows. MKK3-MPK7 module acts as a positive regulator of PR1 gene expression. In Arabidopsis thaliana (Mouse-ear cress), this protein is Mitogen-activated protein kinase 7 (MPK7).